The chain runs to 159 residues: Probable cyclic pyranopterin monophosphate synthase accessory protein (159 aa).

D128 is a catalytic residue.

It belongs to the MoaC family.

It participates in cofactor biosynthesis; molybdopterin biosynthesis. Functionally, together with MoaA, is involved in the conversion of 5'-GTP to cyclic pyranopterin monophosphate (cPMP or molybdopterin precursor Z). This is Probable cyclic pyranopterin monophosphate synthase accessory protein from Methanothermobacter thermautotrophicus (strain ATCC 29096 / DSM 1053 / JCM 10044 / NBRC 100330 / Delta H) (Methanobacterium thermoautotrophicum).